We begin with the raw amino-acid sequence, 776 residues long: Calcium-independent phospholipase A2-gamma (776 aa).

2 N-linked (GlcNAc...) asparagine glycosylation sites follow: asparagine 4 and asparagine 157. Disordered regions lie at residues 216 to 276 (KGKM…HPVS) and 306 to 334 (KLKS…DKKA). Basic and acidic residues-rich tracts occupy residues 221–239 (QTKE…ERKS) and 247–263 (VADR…KDKL). A PNPLA domain is found at 439–634 (LTIDGGGTRG…LLNNPSALAL (196 aa)). The GXGXXG motif lies at 443–448 (GGGTRG). The helical transmembrane segment at 469–489 (LFDYICGVSTGAILAFMLGLF) threads the bilayer. Residues 475 to 479 (GVSTG) carry the GXSXG motif. Serine 477 acts as the Nucleophile in catalysis. Residue aspartate 621 is the Proton acceptor of the active site. Residues 621-623 (DGG) carry the DGA/G motif. Position 730 is an N6-succinyllysine (lysine 730).

As to expression, expressed in myocardium (at protein level).

It localises to the endoplasmic reticulum membrane. Its subcellular location is the mitochondrion membrane. It is found in the peroxisome membrane. It catalyses the reaction a 1,2-diacyl-sn-glycero-3-phosphocholine + H2O = a 1-acyl-sn-glycero-3-phosphocholine + a fatty acid + H(+). It carries out the reaction a 1,2-diacyl-sn-glycero-3-phosphocholine + H2O = a 2-acyl-sn-glycero-3-phosphocholine + a fatty acid + H(+). The enzyme catalyses a 1,2-diacyl-sn-glycero-3-phosphoethanolamine + H2O = a 1-acyl-sn-glycero-3-phosphoethanolamine + a fatty acid + H(+). The catalysed reaction is a 1-O-(1Z-alkenyl)-2-acyl-sn-glycero-3-phosphocholine + H2O = a 1-O-(1Z-alkenyl)-sn-glycero-3-phosphocholine + a fatty acid + H(+). It catalyses the reaction a 1-acyl-sn-glycero-3-phosphocholine + H2O = sn-glycerol 3-phosphocholine + a fatty acid + H(+). It carries out the reaction 1-hexadecanoyl-2-(5Z,8Z,11Z,14Z-eicosatetraenoyl)-sn-glycero-3-phosphocholine + H2O = 2-(5Z,8Z,11Z,14Z)-eicosatetraenoyl-sn-glycero-3-phosphocholine + hexadecanoate + H(+). The enzyme catalyses 1-acyl-2-(9Z,12Z)-octadecadienoyl-sn-glycero-3-phosphocholine + H2O = a 1-acyl-sn-glycero-3-phosphocholine + (9Z,12Z)-octadecadienoate + H(+). The catalysed reaction is 1-acyl-2-(5Z,8Z,11Z,14Z-eicosatetraenoyl)-sn-glycero-3-phosphocholine + H2O = a 1-acyl-sn-glycero-3-phosphocholine + (5Z,8Z,11Z,14Z)-eicosatetraenoate + H(+). It catalyses the reaction 1-hexadecanoyl-2-(5Z,8Z,11Z,14Z-eicosatetraenoyl)-sn-glycero-3-phosphocholine + H2O = 1-hexadecanoyl-sn-glycero-3-phosphocholine + (5Z,8Z,11Z,14Z)-eicosatetraenoate + H(+). It carries out the reaction 1-octadecanoyl-2-(9Z-octadecenoyl)-sn-glycero-3-phosphocholine + H2O = 1-octadecanoyl-sn-glycero-3-phosphocholine + (9Z)-octadecenoate + H(+). The enzyme catalyses 1-hexadecanoyl-2-(9Z-octadecenoyl)-sn-glycero-3-phosphocholine + H2O = 1-hexadecanoyl-sn-glycero-3-phosphocholine + (9Z)-octadecenoate + H(+). The catalysed reaction is 1-hexadecanoyl-2-(9Z,12Z-octadecadienoyl)-sn-glycero-3-phosphocholine + H2O = (9Z,12Z)-octadecadienoate + 1-hexadecanoyl-sn-glycero-3-phosphocholine + H(+). It catalyses the reaction 1-acyl-2-(9Z,12Z)-octadecadienoyl-sn-glycero-3-phosphoethanolamine + H2O = a 1-acyl-sn-glycero-3-phosphoethanolamine + (9Z,12Z)-octadecadienoate + H(+). It carries out the reaction 1-acyl-2-(5Z,8Z,11Z,14Z)-eicosatetraenoyl-sn-glycero-3-phosphoethanolamine + H2O = a 1-acyl-sn-glycero-3-phosphoethanolamine + (5Z,8Z,11Z,14Z)-eicosatetraenoate + H(+). The enzyme catalyses 1-hexadecanoyl-2-(5Z,8Z,11Z,14Z-eicosatetraenoyl)-sn-glycero-3-phosphoethanolamine + H2O = 1-hexadecanoyl-sn-glycero-3-phosphoethanolamine + (5Z,8Z,11Z,14Z)-eicosatetraenoate + H(+). The catalysed reaction is 1-octadecanoyl-2-(9Z-octadecenoyl)-sn-glycero-3-phosphocholine + H2O = 2-(9Z-octadecenoyl)-sn-glycero-3-phosphocholine + octadecanoate + H(+). It catalyses the reaction 1-hexadecanoyl-2-(4Z,7Z,10Z,13Z,16Z,19Z-docosahexaenoyl)-sn-glycero-3-phosphocholine + H2O = 2-(4Z,7Z,10Z,13Z,16Z,19Z-docosahexaenoyl)-sn-glycero-3-phosphocholine + hexadecanoate + H(+). It carries out the reaction 1-O-(1Z)-hexadecenyl-2 (5Z,8Z,11Z,14Z)-eicosatetraenoyl-sn-glycero-3-phosphocholine + H2O = 1-(1Z-hexadecenyl)-sn-glycero-3-phosphocholine + (5Z,8Z,11Z,14Z)-eicosatetraenoate + H(+). The enzyme catalyses 1-O-(1Z-hexadecenyl)-2-(9Z-octadecenoyl)-sn-glycero-3-phosphocholine + H2O = 1-(1Z-hexadecenyl)-sn-glycero-3-phosphocholine + (9Z)-octadecenoate + H(+). The catalysed reaction is 1-hexadecanoyl-sn-glycero-3-phosphocholine + H2O = sn-glycerol 3-phosphocholine + hexadecanoate + H(+). It catalyses the reaction 1',3'-bis-[1,2-di-(9Z,12Z-octadecadienoyl)-sn-glycero-3-phospho]-glycerol + H2O = 1'-[1,2-di-(9Z,12Z-octadecadienoyl)-sn-glycero-3-phospho]-3'-[1-(9Z,12Z-octadecadienoyl)-sn-glycero-3-phospho]-glycerol + (9Z,12Z)-octadecadienoate + H(+). It carries out the reaction 1'-[1-acyl-2-(9-hydroxy-(10E,12Z)-octadecadienoyl)-sn-glycero-3-phospho]-3'-[1,2-diacyl-sn-glycero-3-phospho]-glycerol + H2O = 9-hydroxy-(10E,12Z)-octadecadienoate + 1'-[1,2-diacyl-sn-glycero-3-phospho],3'-[1-acyl-sn-glycero-3-phospho]-glycerol + H(+). Its pathway is phospholipid metabolism. With respect to regulation, calcium-independent phospholipase. Functionally, calcium-independent and membrane-bound phospholipase, that catalyzes the esterolytic cleavage of fatty acids from glycerophospholipids to yield free fatty acids and lysophospholipids, hence regulating membrane physical properties and the release of lipid second messengers and growth factors. Hydrolyzes phosphatidylethanolamine, phosphatidylcholine and probably phosphatidylinositol with a possible preference for the former. Also has a broad substrate specificity in terms of fatty acid moieties, hydrolyzing saturated and mono-unsaturated fatty acids at nearly equal rates from either the sn-1 or sn-2 position in diacyl phosphatidylcholine. However, has a weak activity toward polyunsaturated fatty acids at the sn-2 position, and thereby favors the production of 2-arachidonoyl lysophosphatidylcholine, a key branch point metabolite in eicosanoid signaling. On the other hand, can produce arachidonic acid from the sn-1 position of diacyl phospholipid and from the sn-2 position of arachidonate-containing plasmalogen substrates. Therefore, plays an important role in the mobilization of arachidonic acid in response to cellular stimuli and the generation of lipid second messengers. Can also hydrolyze lysophosphatidylcholine. In the mitochondrial compartment, catalyzes the hydrolysis and release of oxidized aliphatic chains from cardiolipin and integrates mitochondrial bioenergetics and signaling. It is essential for maintaining efficient bioenergetic mitochondrial function through tailoring mitochondrial membrane lipid metabolism and composition. The chain is Calcium-independent phospholipase A2-gamma from Mus musculus (Mouse).